A 154-amino-acid polypeptide reads, in one-letter code: Transcriptional repressor NrdR (154 aa).

A zinc finger lies at 3–34 (CPFCGANDTKVIDSRLVAEGEQVRRRRECVAC). In terms of domain architecture, ATP-cone spans 49–139 (PRLIKQDGTR…VYRRFQDLDE (91 aa)).

This sequence belongs to the NrdR family. It depends on Zn(2+) as a cofactor.

Its function is as follows. Negatively regulates transcription of bacterial ribonucleotide reductase nrd genes and operons by binding to NrdR-boxes. This is Transcriptional repressor NrdR from Pseudomonas putida (strain W619).